A 264-amino-acid chain; its full sequence is Catechol O-methyltransferase B (264 aa).

The signal sequence occupies residues 1–29 (MLGVLLCWCLGASVLLYVLYSWLIPAAVQ). Asparagine 31 carries N-linked (GlcNAc...) asparagine glycosylation. Residues valine 92, serine 122, glutamate 140, and aspartate 191 each coordinate S-adenosyl-L-methionine. Aspartate 191 provides a ligand contact to Mg(2+). Lysine 194 is a substrate binding site. Mg(2+) contacts are provided by aspartate 219 and asparagine 220. The substrate site is built by asparagine 220 and glutamate 249.

It belongs to the class I-like SAM-binding methyltransferase superfamily. Cation-dependent O-methyltransferase family. Mg(2+) serves as cofactor. In terms of tissue distribution, strongly expressed in eye, diencephalon, spinal cord, hindbrain, liver, kidney and telencephalon. Also detected at very low levels in muscle, spleen, anterior gut and heart. In eye, expressed strongly in retina. In brain, expressed in the central part of the telencephalon, the periventricular gray zone of the optic tectum, the periglomerular nucleus, the olfactory bulb, and the region adjacent to the diencephalic ventricle in the hypothalamus. Expressed in gill, with strongest expression in gill filaments nearest the gill arch, and in esophageal epithelium.

The protein resides in the secreted. The enzyme catalyses a catechol + S-adenosyl-L-methionine = a guaiacol + S-adenosyl-L-homocysteine + H(+). Its function is as follows. Catalyzes the O-methylation, and thereby the inactivation, of catecholamine neurotransmitters and catechol hormones. The polypeptide is Catechol O-methyltransferase B (Danio rerio (Zebrafish)).